We begin with the raw amino-acid sequence, 127 residues long: Small ribosomal subunit protein uS17m (127 aa).

This sequence belongs to the universal ribosomal protein uS17 family.

Its subcellular location is the mitochondrion. In Dictyostelium discoideum (Social amoeba), this protein is Small ribosomal subunit protein uS17m (mrps17).